We begin with the raw amino-acid sequence, 716 residues long: Fatty acid oxidation complex subunit alpha (716 aa).

Residues 1–189 form an enoyl-CoA hydratase/isomerase region; sequence MIYQSPTIQV…KVGAVDAVVA (189 aa). Residue Asp296 coordinates substrate. Residues 311–716 are 3-hydroxyacyl-CoA dehydrogenase; sequence KAVNSAAVLG…AANNGSYYQA (406 aa). NAD(+)-binding positions include Met324, Asp343, 400–402, Lys407, and Ser429; that span reads VVE. The active-site For 3-hydroxyacyl-CoA dehydrogenase activity is His450. Asn453 serves as a coordination point for NAD(+). Residues Asn500 and Tyr660 each coordinate substrate.

The protein in the N-terminal section; belongs to the enoyl-CoA hydratase/isomerase family. In the C-terminal section; belongs to the 3-hydroxyacyl-CoA dehydrogenase family. As to quaternary structure, heterotetramer of two alpha chains (FadB) and two beta chains (FadA).

The enzyme catalyses a (3S)-3-hydroxyacyl-CoA + NAD(+) = a 3-oxoacyl-CoA + NADH + H(+). It carries out the reaction a (3S)-3-hydroxyacyl-CoA = a (2E)-enoyl-CoA + H2O. It catalyses the reaction a 4-saturated-(3S)-3-hydroxyacyl-CoA = a (3E)-enoyl-CoA + H2O. The catalysed reaction is (3S)-3-hydroxybutanoyl-CoA = (3R)-3-hydroxybutanoyl-CoA. The enzyme catalyses a (3Z)-enoyl-CoA = a 4-saturated (2E)-enoyl-CoA. It carries out the reaction a (3E)-enoyl-CoA = a 4-saturated (2E)-enoyl-CoA. The protein operates within lipid metabolism; fatty acid beta-oxidation. Its function is as follows. Involved in the aerobic and anaerobic degradation of long-chain fatty acids via beta-oxidation cycle. Catalyzes the formation of 3-oxoacyl-CoA from enoyl-CoA via L-3-hydroxyacyl-CoA. It can also use D-3-hydroxyacyl-CoA and cis-3-enoyl-CoA as substrate. This Shewanella oneidensis (strain ATCC 700550 / JCM 31522 / CIP 106686 / LMG 19005 / NCIMB 14063 / MR-1) protein is Fatty acid oxidation complex subunit alpha.